The chain runs to 535 residues: 5,6-dihydroxyindole-2-carboxylic acid oxidase (535 aa).

The first 23 residues, Met-1–Ala-23, serve as a signal peptide directing secretion. At Gln-24 to Thr-478 the chain is on the lumenal, melanosome side. Disulfide bonds link Cys-29–Cys-40, Cys-41–Cys-64, Cys-55–Cys-98, Cys-100–Cys-109, and Cys-112–Cys-121. N-linked (GlcNAc...) asparagine glycans are attached at residues Asn-95 and Asn-103. Residue Asn-180 is glycosylated (N-linked (GlcNAc...) asparagine). Zn(2+)-binding residues include His-191, His-214, and His-223. Disulfide bonds link Cys-257–Cys-260 and Cys-289–Cys-302. N-linked (GlcNAc...) asparagine glycans are attached at residues Asn-303 and Asn-349. Zn(2+) is bound by residues His-376 and His-380. A glycan (N-linked (GlcNAc...) asparagine) is linked at Asn-384. His-403 is a binding site for Zn(2+). Residues Ile-479–Val-499 traverse the membrane as a helical segment. At Arg-500 to Val-535 the chain is on the cytoplasmic side.

It belongs to the tyrosinase family. In terms of assembly, tyrosinase, TYRP1 and TYRP2 may form a multienzyme complex. Cu(2+) serves as cofactor. Zn(2+) is required as a cofactor.

It is found in the melanosome membrane. The enzyme catalyses 2 5,6-dihydroxyindole-2-carboxylate + O2 = 2 indole-5,6-quinone-2-carboxylate + 2 H2O. The protein operates within pigment biosynthesis; melanin biosynthesis. Functionally, plays a role in melanin biosynthesis. Catalyzes the oxidation of 5,6-dihydroxyindole-2-carboxylic acid (DHICA) into indole-5,6-quinone-2-carboxylic acid. May regulate or influence the type of melanin synthesized. Also to a lower extent, capable of hydroxylating tyrosine and producing melanin. In Gallus gallus (Chicken), this protein is 5,6-dihydroxyindole-2-carboxylic acid oxidase (TYRP1).